The sequence spans 768 residues: MKVIGLADSELESSLRKAGIGMSASEARSIASILGRDPTLAELFCYDAMWSEHCSYKSSRAVLREFLPTEGPNVVLGPVEDAGIVSIDDEWCVVISHESHNHPSQILPNEGAATGIGGIVRDVNCMGARVVATADPLRFGDPYGRESSRVRWVAEGVVDGIWQYGNALGVPVIAGDVVFSRCFDYNCLVNVVAIGVVRRDEIIRSRAPPGSGEKGYDVILIGKPTDSSGLGGVIFASDTLREEEEEANRGAVQIPDPFLKNVLFKANEDLFRLVREKGVEIGFKDLGGGGLTCASSEMGAAGGYGMEIDLDRLHVAGEFPPEVLCIAETQERFLIIAPRELRERILKIYNEDWDLPNVYEGARASVIGRVTTHDRYIVRHRGEEVVNVPIKHLTGGIRYERVWRPRIRNLVEPDVRMPEDLNRVMLDMLASPNIASREHIYRYYDTEVQGNTVIRPGEADAGLLAPIRERDFGIALSVDSNPFYGRISPYWGGATAVAEAMRNVAAIGATPSTLTDCLNFGNPEKPEAFWEFRESVRGLADAARNLWLKGHPNQPVPIVSGNVSFYNESPEGAVDPSPVIACVGIMRDISRAITMSLKEAGDGLYLLGPRFDELGGSEYYRLIWGVTGANVPVVRFPLERSMIYTVIDAVDREILRAAHDISNGGMAITAAEMCMLSDHGISIDISDLGDMRSDKLLFSESSGFVVEVADGAEQEFVSIARSYDLNPVRLGSVSTGDIEMARDGKMLVRLDPEEAREAWSSGLREAMR.

Residue His-53 is part of the active site. Residue Tyr-56 coordinates ATP. Glu-98 contacts Mg(2+). Substrate-binding positions include 99-102 and Arg-121; that span reads SHNH. The Proton acceptor role is filled by His-100. Asp-122 serves as a coordination point for Mg(2+). Gln-253 contacts substrate. Residue Asp-285 coordinates Mg(2+). Position 328 to 330 (328 to 330) interacts with substrate; sequence ETQ. ATP contacts are provided by Asp-516 and Gly-561. Asn-562 is a binding site for Mg(2+). Ser-564 contributes to the substrate binding site.

It belongs to the FGAMS family. In terms of assembly, monomer. Part of the FGAM synthase complex composed of 1 PurL, 1 PurQ and 2 PurS subunits.

The protein resides in the cytoplasm. It catalyses the reaction N(2)-formyl-N(1)-(5-phospho-beta-D-ribosyl)glycinamide + L-glutamine + ATP + H2O = 2-formamido-N(1)-(5-O-phospho-beta-D-ribosyl)acetamidine + L-glutamate + ADP + phosphate + H(+). The protein operates within purine metabolism; IMP biosynthesis via de novo pathway; 5-amino-1-(5-phospho-D-ribosyl)imidazole from N(2)-formyl-N(1)-(5-phospho-D-ribosyl)glycinamide: step 1/2. Part of the phosphoribosylformylglycinamidine synthase complex involved in the purines biosynthetic pathway. Catalyzes the ATP-dependent conversion of formylglycinamide ribonucleotide (FGAR) and glutamine to yield formylglycinamidine ribonucleotide (FGAM) and glutamate. The FGAM synthase complex is composed of three subunits. PurQ produces an ammonia molecule by converting glutamine to glutamate. PurL transfers the ammonia molecule to FGAR to form FGAM in an ATP-dependent manner. PurS interacts with PurQ and PurL and is thought to assist in the transfer of the ammonia molecule from PurQ to PurL. This chain is Phosphoribosylformylglycinamidine synthase subunit PurL, found in Methanothrix thermoacetophila (strain DSM 6194 / JCM 14653 / NBRC 101360 / PT) (Methanosaeta thermophila).